Reading from the N-terminus, the 485-residue chain is Glutamate--tRNA ligase (485 aa).

A 'HIGH' region motif is present at residues Pro-10 to Asn-20. The 'KMSKS' region motif lies at Lys-253–Arg-257. Lys-256 is an ATP binding site.

It belongs to the class-I aminoacyl-tRNA synthetase family. Glutamate--tRNA ligase type 1 subfamily. Monomer.

It localises to the cytoplasm. The catalysed reaction is tRNA(Glu) + L-glutamate + ATP = L-glutamyl-tRNA(Glu) + AMP + diphosphate. Functionally, catalyzes the attachment of glutamate to tRNA(Glu) in a two-step reaction: glutamate is first activated by ATP to form Glu-AMP and then transferred to the acceptor end of tRNA(Glu). This is Glutamate--tRNA ligase from Enterococcus faecalis (strain ATCC 700802 / V583).